We begin with the raw amino-acid sequence, 341 residues long: MGVQIGELIPRKEIELENLYGRRVAIDAFNAIYQFLSTIRQRDGTPLMDSQGRITSHLSGLFYRTINLMEAGIKPAYIFDGKPPDFKKRELEKRREAREEAEEKWYEALERGDLEEAKKYAMRATRVNEGLINDAKTLLELMGIPVIQAPSEGEAQAAYMAAKKKVYASASQDYDSLLFGAPKLVRNLTITGRRKLPGKNVYVEVKPELIVLEEVLKELSIDREKLIEMAILVGTDYNPGGIKGIGPKKALTIVKRTKDPLKKYQKESEVDLYAIKEFFLNPPVTDDYELKWREPDEEGIIKFLCDEHDFSEERVKNGLERLKKAVKAGKQSTLESWFGRR.

The interval Met-1–Arg-98 is N-domain. Residues Asp-27, Asp-80, Glu-152, Glu-154, Asp-173, Asp-175, and Asp-236 each coordinate Mg(2+). Residues Glu-116–Lys-258 form an I-domain region. The tract at residues Lys-330–Phe-338 is interaction with PCNA.

The protein belongs to the XPG/RAD2 endonuclease family. FEN1 subfamily. In terms of assembly, interacts with PCNA. PCNA stimulates the nuclease activity without altering cleavage specificity. Requires Mg(2+) as cofactor.

Structure-specific nuclease with 5'-flap endonuclease and 5'-3' exonuclease activities involved in DNA replication and repair. During DNA replication, cleaves the 5'-overhanging flap structure that is generated by displacement synthesis when DNA polymerase encounters the 5'-end of a downstream Okazaki fragment. Binds the unpaired 3'-DNA end and kinks the DNA to facilitate 5' cleavage specificity. Cleaves one nucleotide into the double-stranded DNA from the junction in flap DNA, leaving a nick for ligation. Also involved in the base excision repair (BER) pathway. Acts as a genome stabilization factor that prevents flaps from equilibrating into structures that lead to duplications and deletions. Also possesses 5'-3' exonuclease activity on nicked or gapped double-stranded DNA. This is Flap endonuclease 1 from Thermococcus onnurineus (strain NA1).